The chain runs to 82 residues: Small ribosomal subunit protein bS16 (82 aa).

This sequence belongs to the bacterial ribosomal protein bS16 family.

This chain is Small ribosomal subunit protein bS16, found in Histophilus somni (strain 2336) (Haemophilus somnus).